Consider the following 134-residue polypeptide: Profilin-4 (134 aa).

Residues Cys13 and Cys118 are joined by a disulfide bond. The Involved in PIP2 interaction signature appears at 84-100; it reads AVIRGKKGSGGITIKKT. Position 114 is a phosphothreonine (Thr114).

This sequence belongs to the profilin family. Occurs in many kinds of cells as a complex with monomeric actin in a 1:1 ratio. In terms of processing, phosphorylated by MAP kinases.

The protein localises to the cytoplasm. It localises to the cytoskeleton. Its function is as follows. Binds to actin and affects the structure of the cytoskeleton. At high concentrations, profilin prevents the polymerization of actin, whereas it enhances it at low concentrations. The polypeptide is Profilin-4 (Olea europaea (Common olive)).